The following is a 191-amino-acid chain: HTH-type transcriptional regulator YjdC (191 aa).

The HTH tetR-type domain maps to Met-1–Ile-60.

The chain is HTH-type transcriptional regulator YjdC (yjdC) from Escherichia coli (strain K12).